The following is a 500-amino-acid chain: MNDFPWLTIIVVFPISAGSLMLFLPHRGNKINKWYTICICILELLITTYAFCYNFKMDDPLIQMSEDYKWINFFDFDWRLGIDGLSIGTILLTGFITTLATLAAFPVTRDSRLFHFLMLAMYSGQIGSFSSRDLLLFFIMWELELIPVYLLLSMWGGKKRLYSATKFILYTAGSSIFLLIGVLGISLYGSNEPTLNLELLANQSYPVTLEILFYIGFVIALTVKSPIIPLHTWLPDTHGEAHYSTCMLLAGILLKMGAYGLVRINMELLPHAHSLFSPWLMAVGTIQIIYAASTSPGQRNLKKRIAYSSVSHMGFIIIGIGSITDPGLNGAILQIISHGFIGAALFFLAGTSYDRMRLVYLDEMGGMAISIPKIFTMFTILSMASLALPGMSGFVAELIVFFGIITSQKYFVISKILIIFVMAIGIILTPIYLLSMSRQMFYGYKLSNVKNLSFFDSGPRELFLSISILLPIIGIGIYPDFVLSLASDKVESILSNYFYG.

The next 14 membrane-spanning stretches (helical) occupy residues 4–24 (FPWL…MLFL), 35–55 (YTIC…CYNF), 87–107 (IGTI…AFPV), 113–130 (LFHF…GSFS), 134–154 (LLLF…LLSM), 167–187 (FILY…GISL), 211–231 (ILFY…IPLH), 242–262 (HYST…YGLV), 272–292 (AHSL…IYAA), 305–325 (IAYS…SITD), 330–350 (GAIL…FLAG), 386–406 (LALP…GIIT), 416–436 (ILII…LLSM), and 462–482 (LFLS…PDFV).

It belongs to the complex I subunit 4 family.

The protein resides in the plastid. It is found in the chloroplast thylakoid membrane. The catalysed reaction is a plastoquinone + NADH + (n+1) H(+)(in) = a plastoquinol + NAD(+) + n H(+)(out). It carries out the reaction a plastoquinone + NADPH + (n+1) H(+)(in) = a plastoquinol + NADP(+) + n H(+)(out). This chain is NAD(P)H-quinone oxidoreductase chain 4, chloroplastic, found in Draba nemorosa (Woodland whitlowgrass).